The following is a 136-amino-acid chain: Autophagy-related protein 41 (136 aa).

The segment at 127–136 is ATG9-binding; it reads QNYRLWLSSV.

As to quaternary structure, interacts with ATG9.

The protein localises to the preautophagosomal structure membrane. Involved in both selective and non-selective autophagy. Does not appear to play a role in determining the size of autophagosomes, but rather influences their formation rate. With ATG9, plays a role in the delivery of donor membrane to expanding phagophore. The polypeptide is Autophagy-related protein 41 (Saccharomyces cerevisiae (strain ATCC 204508 / S288c) (Baker's yeast)).